Here is a 322-residue protein sequence, read N- to C-terminus: Mas-related G-protein coupled receptor member X3 (322 aa).

Topologically, residues 1–31 (MDSTIPVLGTELTPINGREETPCYKQTLSFT) are extracellular. The chain crosses the membrane as a helical span at residues 32–52 (GLTCIVSLVALTGNAVVLWLL). The Cytoplasmic segment spans residues 53 to 60 (GCRMRRNA). Residues 61–81 (VSIYILNLVAADFLFLSGHII) form a helical membrane-spanning segment. Over 82–96 (CSPLRLINIRHPISK) the chain is Extracellular. A helical transmembrane segment spans residues 97 to 117 (ILSPVMTFPYFIGLSMLSAIS). Residues 118 to 140 (TERCLSILWPIWYHCRRPRYLSS) lie on the Cytoplasmic side of the membrane. A helical membrane pass occupies residues 141–161 (VMCVLLWALSLLRSILEWMFC). Residues 162-177 (DFLFSGANSVWCETSD) are Extracellular-facing. The helical transmembrane segment at 178–198 (FITIAWLVFLCVVLCGSSLVL) threads the bilayer. Residues 199–213 (LVRILCGSRKMPLTR) are Cytoplasmic-facing. Residues 214–234 (LYVTILLTVLVFLLCGLPFGI) form a helical membrane-spanning segment. Topologically, residues 235–254 (QWALFSRIHLDWKVLFCHVH) are extracellular. The chain crosses the membrane as a helical span at residues 255–275 (LVSIFLSALNSSANPIIYFFV). Residues 276-322 (GSFRQRQNRQNLKLVLQRALQDTPEVDEGGGWLPQETLELSGSRLEQ) lie on the Cytoplasmic side of the membrane.

It belongs to the G-protein coupled receptor 1 family. Mas subfamily. As to expression, uniquely localized in a subset of small dorsal root and trigeminal sensory neurons.

It localises to the cell membrane. Its function is as follows. Orphan receptor. Probably involved in the function of nociceptive neurons. May regulate nociceptor function and/or development, including the sensation or modulation of pain. Potently activated by enkephalins. This is Mas-related G-protein coupled receptor member X3 (MRGPRX3) from Homo sapiens (Human).